The following is a 333-amino-acid chain: Acyl-CoA wax alcohol acyltransferase 2 (333 aa).

3 helical membrane passes run 15 to 35 (VFAL…VIIV), 38 to 58 (YLVV…WLAF), and 130 to 150 (TFPG…VPFL).

Belongs to the diacylglycerol acyltransferase family. In terms of assembly, monomer. In terms of tissue distribution, expressed in Mueller cells of the retina (at protein level). Abundant in tissues rich in sebaceous glands such as the preputial gland and eyelid.

It localises to the endoplasmic reticulum membrane. It catalyses the reaction a long chain fatty alcohol + a fatty acyl-CoA = a wax ester + CoA. The enzyme catalyses all-trans-retinol + an acyl-CoA = an all-trans-retinyl ester + CoA. It carries out the reaction an acyl-CoA + a 1,2-diacyl-sn-glycerol = a triacyl-sn-glycerol + CoA. The catalysed reaction is 9-cis-retinol + a fatty acyl-CoA = 9-cis-retinyl ester + CoA. It catalyses the reaction 11-cis-retinol + a fatty acyl-CoA = 11-cis-retinyl ester + CoA. The enzyme catalyses 13-cis-retinol + a fatty acyl-CoA = 13-cis-retinyl ester + CoA. It carries out the reaction a 1-acylglycerol + an acyl-CoA = a 1,2-diacylglycerol + CoA. The catalysed reaction is 1-O-alkylglycerol + an acyl-CoA = 1-O-alkyl-3-acylglycerol + CoA. It catalyses the reaction a 2-acylglycerol + an acyl-CoA = a 1,2-diacyl-sn-glycerol + CoA. The enzyme catalyses 2-(9Z-octadecenoyl)-glycerol + hexadecanoyl-CoA = 1-hexadecanoyl-2-(9Z-octadecenoyl)-sn-glycerol + CoA. It carries out the reaction 1,2-di-(9Z-octadecenoyl)-sn-glycerol + hexadecanoyl-CoA = 1,2-di-(9Z)-octadecenoyl-3-hexadecanoyl-sn-glycerol + CoA. The catalysed reaction is hexadecan-1-ol + hexadecanoyl-CoA = hexadecanyl hexadecanoate + CoA. It catalyses the reaction hexadecane-1,2-diol + hexadecanoyl-CoA = 2-hydroxyhexadecyl hexadecanoate + CoA. The enzyme catalyses all-trans-retinol + hexadecanoyl-CoA = all-trans-retinyl hexadecanoate + CoA. It carries out the reaction 1,2-di-(9Z-octadecenoyl)-sn-glycerol + (9Z)-octadecenoyl-CoA = 1,2,3-tri-(9Z-octadecenoyl)-glycerol + CoA. The catalysed reaction is hexadecan-1-ol + (9Z)-octadecenoyl-CoA = hexadecanyl (9Z)-octadecenoate + CoA. It catalyses the reaction (9Z)-hexadecen-1-ol + (9Z)-octadecenoyl-CoA = 1-O-(9Z)-hexadecenyl (9Z)-octadecenoate + CoA. The enzyme catalyses octadecan-1-ol + (9Z)-octadecenoyl-CoA = 1-O-octadecyl (9Z)-octadecenoate + CoA. It carries out the reaction (9Z)-octadecen-1-ol + (9Z)-octadecenoyl-CoA = 1-O-(9Z)-octadecenyl (9Z)-octadecenoate + CoA. The catalysed reaction is hexadecan-1-ol + (9Z)-hexadecenoyl-CoA = 1-O-hexadecyl (9Z)-hexadecenoate + CoA. It catalyses the reaction hexadecan-1-ol + octadecanoyl-CoA = hexadecanyl octadecanoate + CoA. The enzyme catalyses 11-cis-retinol + hexadecanoyl-CoA = 11-cis-retinyl hexadecanoate + CoA. It carries out the reaction 1-O-(9Z-octadecenyl)-glycerol + (9Z)-octadecenoyl-CoA = 1-O-(9Z-octadecyl)-3-(9Z-octadecenoyl)-glycerol + CoA. The catalysed reaction is 1-(9Z-octadecenoyl)-glycerol + (9Z)-octadecenoyl-CoA = 1,2-di-(9Z-octadecenoyl)-glycerol + CoA. It catalyses the reaction 11-cis-retinol + tetradecanoyl-CoA = 11-cis-retinyl tetradecanoate + CoA. The enzyme catalyses 9-cis-retinol + tetradecanoyl-CoA = 9-cis-retinyl tetradecanoate + CoA. It carries out the reaction 9-cis-retinol + hexadecanoyl-CoA = 9-cis-retinyl hexadecanoate + CoA. The catalysed reaction is 13-cis-retinol + tetradecanoyl-CoA = 13-cis-retinyl tetradecanoate + CoA. It catalyses the reaction all-trans-retinol + tetradecanoyl-CoA = all-trans-retinyl tetradecanoate + CoA. The enzyme catalyses tetradecan-1-ol + tetradecanoyl-CoA = tetradecanyl tetradecanoate + CoA. 11-cis retinoids act as allosteric modulators of acyl-CoA retinol O-fatty-acyltransferase (ARAT) activity by suppressing esterification of 9-cis, 13-cis, or all-trans retinols concurrently increasing the enzyme specificity toward 11-cis isomer. In terms of biological role, acyltransferase that catalyzes the formation of ester bonds between fatty alcohols and fatty acyl-CoAs to form wax monoesters. Shows a preference for medium chain acyl-CoAs from C12 to C16 in length and fatty alcohols shorter than C20, as the acyl donor and acceptor, respectively. Also possesses fatty acyl-CoA retinol acyltransferase (ARAT) activity that preferentially esterifies 11-cis-retinol, a chromophore precursor of bleached opsin pigments in cone cells. Shows higher catalytic efficiency toward 11-cis-retinol versus 9-cis-retinol, 13- cis-retinol and all-trans-retinol substrates. The chain is Acyl-CoA wax alcohol acyltransferase 2 (Awat2) from Mus musculus (Mouse).